Consider the following 183-residue polypeptide: Large ribosomal subunit protein eL18 (183 aa).

The segment at arginine 150–valine 183 is disordered.

It belongs to the eukaryotic ribosomal protein eL18 family.

The protein resides in the cytoplasm. This is Large ribosomal subunit protein eL18 (RpL18) from Bombyx mori (Silk moth).